The chain runs to 806 residues: Mitochondrial intermediate peptidase (806 aa).

Residues 1–29 (MLSRHLTVLRSACRVSHDLRVPSTQAVRK) constitute a mitochondrion transit peptide. H581 serves as a coordination point for Zn(2+). E582 is an active-site residue. 2 residues coordinate Zn(2+): H585 and H588.

The protein belongs to the peptidase M3 family. Zn(2+) is required as a cofactor.

The protein localises to the mitochondrion matrix. It carries out the reaction Release of an N-terminal octapeptide as second stage of processing of some proteins imported into the mitochondrion.. Functionally, cleaves proteins, imported into the mitochondrion, to their mature size. While most mitochondrial precursor proteins are processed to the mature form in one step by mitochondrial processing peptidase (MPP), the sequential cleavage by MIP of an octapeptide after initial processing by MPP is a required step for a subgroup of nuclear-encoded precursor proteins destined for the matrix or the inner membrane. The protein is Mitochondrial intermediate peptidase (OCT1) of Malassezia globosa (strain ATCC MYA-4612 / CBS 7966) (Dandruff-associated fungus).